Consider the following 41-residue polypeptide: uncharacterized protein (41 aa).

A helical transmembrane segment spans residues 8 to 28 (IKKIAMFFLGILVGVFIVLFF).

The protein localises to the membrane. This is an uncharacterized protein from Streptococcus pneumoniae serotype 2 (strain D39 / NCTC 7466).